The primary structure comprises 84 residues: Putative UPF0320 protein YNL337W (84 aa).

Belongs to the UPF0320 family.

In Saccharomyces cerevisiae (strain ATCC 204508 / S288c) (Baker's yeast), this protein is Putative UPF0320 protein YNL337W.